A 442-amino-acid chain; its full sequence is Cytokine receptor-like factor 3 (442 aa).

Residues 10-46 (EVLLQEARENVEAAQSYRRELGQRLQGLREAQRQIKE) adopt a coiled-coil conformation. In terms of domain architecture, Fibronectin type-III spans 181 to 274 (PPVQIEELIE…PQTGHSTLVP (94 aa)).

This sequence belongs to the cytokine receptor-like factor 3 family.

Its subcellular location is the cytoplasm. Functionally, may play a role in the negative regulation of cell cycle progression. The protein is Cytokine receptor-like factor 3 (Crlf3) of Mus musculus (Mouse).